A 910-amino-acid polypeptide reads, in one-letter code: Bifunctional glucose-6-phosphate 1-dehydrogenase/6-phosphogluconolactonase (910 aa).

Positions 1-170 are 6-phosphogluconolactonase; the sequence is MDYENFVKSA…DFHIASLFPN (170 aa). Residues 171–276 form a linker region; sequence IFYNIYMNNY…PATYLIDTSC (106 aa). Residues 277–910 are glucose-6-phosphate 1-dehydrogenase; sequence TNENVNINNN…FYEDDLLDIN (634 aa). Residues 345–352, Arg379, and Lys548 each bind NADP(+); that span reads GCSGDLAK. D-glucose 6-phosphate is bound by residues Lys548, 578–582, Glu616, and Asp635; that span reads HYLGK. The active-site Proton acceptor is His640. The tract at residues 689-711 is disordered; it reads ENFKEDENNDDESKKNHSYHDDP. Lys742 is a binding site for NADP(+). Lys745 contacts D-glucose 6-phosphate. Arg755 is an NADP(+) binding site. Residue Gln779 coordinates D-glucose 6-phosphate. Residue 785 to 787 coordinates NADP(+); sequence YLK.

In the N-terminal section; belongs to the glucosamine/galactosamine-6-phosphate isomerase family. 6-phosphogluconolactonase subfamily. The protein in the C-terminal section; belongs to the glucose-6-phosphate dehydrogenase family. In terms of assembly, homotetramer.

The catalysed reaction is 6-phospho-D-glucono-1,5-lactone + H2O = 6-phospho-D-gluconate + H(+). It carries out the reaction D-glucose 6-phosphate + NADP(+) = 6-phospho-D-glucono-1,5-lactone + NADPH + H(+). It participates in carbohydrate degradation; pentose phosphate pathway; D-ribulose 5-phosphate from D-glucose 6-phosphate (oxidative stage): step 1/3. It functions in the pathway carbohydrate degradation; pentose phosphate pathway; D-ribulose 5-phosphate from D-glucose 6-phosphate (oxidative stage): step 2/3. Its activity is regulated as follows. G6PD activity is inhibited by glucosamine-6-phosphate, NADPH, and 4-(4-bromophenyl)-7-(3,4-dimethoxyphenyl)-4,6,7,8-tetrahydroquinoline-2,5(1 H,3H)-dione. G6PD and 6PGL activities can be reversibly inhibited by S-glutathionylation (in vitro). Functionally, bifunctional enzyme which catalyzes the first two steps of the oxidative pentose-phosphate pathway, which represents a route for the dissimilation of carbohydrates besides glycolysis. The main function of this enzyme is to provide reducing power (NADPH) and pentose phosphates for fatty acid and nucleic acid synthesis. The polypeptide is Bifunctional glucose-6-phosphate 1-dehydrogenase/6-phosphogluconolactonase (Plasmodium falciparum (isolate 3D7)).